The sequence spans 201 residues: UPF0376 protein F10G2.1 (201 aa).

Over 1-3 the chain is Cytoplasmic; that stretch reads MKH. The helical; Signal-anchor for type II membrane protein transmembrane segment at 4 to 24 threads the bilayer; sequence FLLLAIIGILFLGSTYGASVA. Residues 25 to 201 are Extracellular-facing; it reads TEKLKASNCT…LLECDFRNIQ (177 aa). N-linked (GlcNAc...) asparagine glycans are attached at residues Asn32 and Asn124.

It belongs to the UPF0376 family.

It is found in the membrane. The sequence is that of UPF0376 protein F10G2.1 from Caenorhabditis elegans.